The chain runs to 622 residues: Chaperone protein HscA homolog (622 aa).

Belongs to the heat shock protein 70 family.

In terms of biological role, chaperone involved in the maturation of iron-sulfur cluster-containing proteins. Has a low intrinsic ATPase activity which is markedly stimulated by HscB. The protein is Chaperone protein HscA homolog of Burkholderia pseudomallei (strain 668).